Consider the following 850-residue polypeptide: Receptor-like serine/threonine-protein kinase SD1-8 (850 aa).

Positions 1-26 are cleaved as a signal peptide; sequence MRGLPNFYHSYTFFFFFLLILFPAYS. Topologically, residues 27-441 are extracellular; sequence ISANTLSASE…LEDKRNRSAK (415 aa). The Bulb-type lectin domain maps to 31–153; the sequence is TLSASESLTI…KNSAPDGVLW (123 aa). Residues Asn-43, Asn-118, and Asn-242 are each glycosylated (N-linked (GlcNAc...) asparagine). An EGF-like domain is found at 292 to 328; that stretch reads PKDQCDEYKECGVYGYCDSNTSPVCNCIKGFKPRNPQ. 4 disulfide bridges follow: Cys-296-Cys-308, Cys-302-Cys-316, Cys-378-Cys-403, and Cys-382-Cys-388. The PAN domain maps to 347–428; the sequence is CGGGDGFVRL…GGQDLYVRLA (82 aa). 2 N-linked (GlcNAc...) asparagine glycosylation sites follow: Asn-387 and Asn-437. A helical membrane pass occupies residues 442–462; it reads IIGSSIGVSVLLLLSFIIFFL. Residues 463–850 lie on the Cytoplasmic side of the membrane; that stretch reads WKRKQKRSIL…QITVSVLDAR (388 aa). Positions 526 to 807 constitute a Protein kinase domain; that stretch reads FSNANKLGQG…LMLGSESTTI (282 aa). ATP contacts are provided by residues 532–540 and Lys-554; that span reads LGQGGFGIV. The caM-binding stretch occupies residues 615 to 632; sequence SRNSKLNWQMRFDIINGI. Asp-651 functions as the Proton acceptor in the catalytic mechanism.

Belongs to the protein kinase superfamily. Ser/Thr protein kinase family. As to quaternary structure, interacts with PUB9, PUB13, PUB14 and PUB38. Expressed in the root-hypocotyl transition zone, at the base of lateral roots, axillary buds and pedicels.

The protein localises to the cell membrane. The enzyme catalyses L-seryl-[protein] + ATP = O-phospho-L-seryl-[protein] + ADP + H(+). It catalyses the reaction L-threonyl-[protein] + ATP = O-phospho-L-threonyl-[protein] + ADP + H(+). Involved in the regulation of cellular expansion and differentiation. This Arabidopsis thaliana (Mouse-ear cress) protein is Receptor-like serine/threonine-protein kinase SD1-8 (SD18).